A 271-amino-acid polypeptide reads, in one-letter code: Undecaprenyl-diphosphatase (271 aa).

Helical transmembrane passes span 5–25, 45–65, 86–106, 114–134, 149–169, 189–209, 226–246, and 251–271; these read YALF…FLPV, AATF…AVFW, TLSL…GLGI, LFGP…LIIA, ISYK…WPGF, AAEF…GLDL, VGFI…LALI, and FIPF…VFVA.

It belongs to the UppP family.

The protein localises to the cell inner membrane. The enzyme catalyses di-trans,octa-cis-undecaprenyl diphosphate + H2O = di-trans,octa-cis-undecaprenyl phosphate + phosphate + H(+). In terms of biological role, catalyzes the dephosphorylation of undecaprenyl diphosphate (UPP). Confers resistance to bacitracin. This chain is Undecaprenyl-diphosphatase, found in Aeromonas salmonicida (strain A449).